A 330-amino-acid chain; its full sequence is Polyprenyl transferase dpfgC (330 aa).

N34 carries N-linked (GlcNAc...) asparagine glycosylation. Helical transmembrane passes span 105–125, 146–166, 175–192, 199–219, 237–257, 273–293, and 310–330; these read ALCVLAAYLFCGAGMVWNDWI, VTTTEAMVWMTLQVIMSWGVL, VLKHLIPVMVASVLYPFG, KLMIYPQYILAFTIAWPAIPG, CLPLCIMVFFWTIYLNTAYSY, NIAGNHIHVLLVLLVSPIILA, and NFILGVWTILACAAEVFLTSA.

This sequence belongs to the UbiA prenyltransferase family. Mg(2+) is required as a cofactor.

It localises to the membrane. It functions in the pathway secondary metabolite biosynthesis; terpenoid biosynthesis. Polyprenyl transferase; part of the gene cluster that mediates the biosynthesis of diterpenoid pyrones. The first step of the pathway is the synthesis of the alpha-pyrone moiety by the polyketide synthase dpfgA via condensation of one acetyl-CoA starter unit with 3 malonyl-CoA units and 2 methylations. The alpha-pyrone is then combined with geranylgeranyl pyrophosphate (GGPP) formed by the GGPP synthase dpfgD through the action of the prenyltransferase dpfgC to yield a linear alpha-pyrone diterpenoid. Subsequent steps in the diterpenoid pyrone biosynthetic pathway involve the decalin core formation, which is initiated by the epoxidation of the C10-C11 olefin by the FAD-dependent oxidoreductase dpfgE, and is followed by a cyclization cascade catalyzed by the terpene cyclase dpfgB. The short chain dehydrogenase/reductase dpfgG then oxidizes the 8S hydroxy group to a ketone and the short chain dehydrogenase/reductase dpfgH reduces the ketone to the 8R hydroxy group to yield higginsianin B. Higginsianin B is further methylated by the methyltransferase dpfgI to produce the intermediate named FDDP B. The cytochrome P450 monooxygenase dfgpJ then catalyzes a three-step oxidation at C-27 to generate a carboxylic acid as well as C-26 hydroxylation. Finally, methyltransferase dpfgK methylates the carboxylic acid generated by dpfgJ, yielding the final diterpenoid pyrones from the pathway which were named FDDP D and FDDP E. In Gibberella zeae (strain ATCC MYA-4620 / CBS 123657 / FGSC 9075 / NRRL 31084 / PH-1) (Wheat head blight fungus), this protein is Polyprenyl transferase dpfgC.